A 214-amino-acid polypeptide reads, in one-letter code: Ribonuclease HII (214 aa).

The RNase H type-2 domain maps to 26–214; the sequence is EIVCGVDEAG…PVREAFDLIR (189 aa). The a divalent metal cation site is built by Asp32, Glu33, and Asp124.

Belongs to the RNase HII family. It depends on Mn(2+) as a cofactor. The cofactor is Mg(2+).

Its subcellular location is the cytoplasm. It catalyses the reaction Endonucleolytic cleavage to 5'-phosphomonoester.. In terms of biological role, endonuclease that specifically degrades the RNA of RNA-DNA hybrids. The chain is Ribonuclease HII from Burkholderia pseudomallei (strain 668).